A 256-amino-acid polypeptide reads, in one-letter code: 5-oxoprolinase subunit A 3 (256 aa).

The protein belongs to the LamB/PxpA family. In terms of assembly, forms a complex composed of PxpA, PxpB and PxpC.

It carries out the reaction 5-oxo-L-proline + ATP + 2 H2O = L-glutamate + ADP + phosphate + H(+). Functionally, catalyzes the cleavage of 5-oxoproline to form L-glutamate coupled to the hydrolysis of ATP to ADP and inorganic phosphate. In Pseudomonas syringae pv. tomato (strain ATCC BAA-871 / DC3000), this protein is 5-oxoprolinase subunit A 3.